A 1604-amino-acid polypeptide reads, in one-letter code: Calmodulin-regulated spectrin-associated protein 1 (1604 aa).

Phosphoserine is present on S216. Positions 235-350 constitute a Calponin-homology (CH) domain; sequence PVDFARVVRY…FIAELFWWFE (116 aa). Phosphoserine occurs at positions 390, 394, and 435. The interval 394–413 is disordered; that stretch reads SPAAMSPADLPPSTQPLTEG. The interval 444 to 491 is disordered; it reads RQKQQKVSQAEEIPDQRHRSNSLTRADGQPRGAAIAWPDKKNRPVSQP. T531 carries the post-translational modification Phosphothreonine. A phosphoserine mark is found at S571, S574, S581, S593, S607, S647, S739, S745, S755, and S757. Residues 642–671 are disordered; it reads MAKRPSEGSQPLVRKKVTGSHGSRDLNRTF. Over residues 784–806 the composition is skewed to basic and acidic residues; that stretch reads EEESAKLQEDMKVKEHEDKDDAS. Disordered stretches follow at residues 784–824 and 842–888; these read EEES…SMSM and LNSC…KDPA. Low complexity-rich tracts occupy residues 813 to 824 and 847 to 858; these read LSTTSQLSSMSM and TKSSTSSSQKTT. Over residues 874–886 the composition is skewed to basic and acidic residues; that stretch reads QKREQSPSRHSKD. The sufficient for interaction with SPTBN1 stretch occupies residues 888–909; that stretch reads ASLLASELVQLHMQLEEKRRAI. Coiled coils occupy residues 890–926 and 1026–1058; these read LLAS…QRLK and DVNE…QEQL. The segment at 920–939 is sufficient for interaction with calmodulin; sequence SARQRLKLGKAAFLHVVKKG. 3 disordered regions span residues 1085-1163, 1246-1271, and 1298-1448; these read FVEP…GELP, PDED…KPGV, and RKAE…DRDW. The residue at position 1090 (S1090) is a Phosphoserine. Positions 1113–1124 are enriched in basic and acidic residues; sequence RPAELKVPKDRQ. A compositionally biased stretch (polar residues) spans 1125–1137; it reads QGCSRSKTPTPSV. S1154 is subject to Phosphoserine. Composition is skewed to basic and acidic residues over residues 1246–1258 and 1298–1348; these read PDED…HESS and RKAE…EYLR. Residues 1286-1357 adopt a coiled-coil conformation; the sequence is AKKRAAFLLK…RRKQQQALEE (72 aa). Basic residues predominate over residues 1363–1374; sequence PKSKPKKPRPKS. The span at 1382-1394 shows a compositional bias: polar residues; the sequence is SDSGTKCSSTPDN. Residues 1395–1412 show a composition bias toward low complexity; it reads LSQTHSGSSLSLASAATT. 2 positions are modified to phosphoserine: S1400 and S1429. Residues 1465–1599 enclose the CKK domain; the sequence is GPKLFKEPSS…QPKRPTVPKK (135 aa). At Y1539 the chain carries Phosphotyrosine.

Belongs to the CAMSAP1 family. As to quaternary structure, interacts with spectrin via SPTBN1; the interaction is direct. Interacts with calmodulin; calcium-dependent it prevents interaction with spectrin. As to expression, in brain, specifically expressed in astrocytes (at protein level).

The protein resides in the cytoplasm. It localises to the cytoskeleton. Key microtubule-organizing protein that specifically binds the minus-end of non-centrosomal microtubules and regulates their dynamics and organization. Specifically recognizes growing microtubule minus-ends and stabilizes microtubules. Acts on free microtubule minus-ends that are not capped by microtubule-nucleating proteins or other factors and protects microtubule minus-ends from depolymerization. In contrast to CAMSAP2 and CAMSAP3, tracks along the growing tips of minus-end microtubules without significantly affecting the polymerization rate: binds at the very tip of the microtubules minus-end and acts as a minus-end tracking protein (-TIP) that dissociates from microtubules after allowing tubulin incorporation. Through interaction with spectrin may regulate neurite outgrowth. In Rattus norvegicus (Rat), this protein is Calmodulin-regulated spectrin-associated protein 1 (Camsap1).